Consider the following 699-residue polypeptide: Catalase-peroxidase (699 aa).

The segment at residues 72–200 is a cross-link (tryptophyl-tyrosyl-methioninium (Trp-Tyr) (with M-226)); the sequence is WHSAGTYRIA…LAAVMMGLIY (129 aa). Histidine 73 serves as the catalytic Proton acceptor. Positions 200–226 form a cross-link, tryptophyl-tyrosyl-methioninium (Tyr-Met) (with W-72); sequence YVNPEGVDGNPDPLKTAKDMRVTFARM. Histidine 241 is a binding site for heme b.

It belongs to the peroxidase family. Peroxidase/catalase subfamily. As to quaternary structure, homodimer or homotetramer. Heme b serves as cofactor. In terms of processing, formation of the three residue Trp-Tyr-Met cross-link is important for the catalase, but not the peroxidase activity of the enzyme.

The catalysed reaction is H2O2 + AH2 = A + 2 H2O. It carries out the reaction 2 H2O2 = O2 + 2 H2O. Functionally, bifunctional enzyme with both catalase and broad-spectrum peroxidase activity. The chain is Catalase-peroxidase from Aeromonas salmonicida (strain A449).